Here is a 248-residue protein sequence, read N- to C-terminus: Probable transcriptional regulatory protein FTF0655 (248 aa).

It belongs to the TACO1 family.

It is found in the cytoplasm. The chain is Probable transcriptional regulatory protein FTF0655 from Francisella tularensis subsp. tularensis (strain FSC 198).